The primary structure comprises 249 residues: MKLNISFPATGCQKLIEVDDERKLRTFYEKRMATEVAADPLGDEWKGYMVRISGGNDKQGFPMKQGVLTHGRVRLLLAKGHSCYRPRRTGERKRKSVRGCIGDANLSVLNLVIIKKGEKDIPGLTDSTVPRRLGPKRASKIRKLFNLAKEDDVRQYVVRRPLTKEGKKPRTKAPRIQRLVTPRVLQHKRRRIALKKQRTQKNKEEASEYAKLLAKRMKEAKEKRQEQIAKRRRLSSLRASTSKSESSQK.

Basic and acidic residues predominate over residues 216–229 (RMKEAKEKRQEQIA). The interval 216-249 (RMKEAKEKRQEQIAKRRRLSSLRASTSKSESSQK) is disordered. Ser235, Ser236, Ser240, Ser244, and Ser247 each carry phosphoserine. Low complexity predominate over residues 236–249 (SLRASTSKSESSQK).

The protein belongs to the eukaryotic ribosomal protein eS6 family. As to quaternary structure, component of the small ribosomal subunit. In terms of processing, ribosomal protein S6 is the major substrate of protein kinases in eukaryote ribosomes. The phosphorylation is stimulated by growth factors, tumor promoting agents, and mitogens. It is dephosphorylated at growth arrest.

It is found in the cytoplasm. Functionally, component of the 40S small ribosomal subunit. Plays an important role in controlling cell growth and proliferation through the selective translation of particular classes of mRNA. The protein is Small ribosomal subunit protein eS6 (rps6) of Oncorhynchus mykiss (Rainbow trout).